Consider the following 445-residue polypeptide: MAGKLGVLLLALVLSLAQPASARRKLLVFLLDGFRADYISDEALESLPGFKEIVSRGVKVDYLTPDFPTLSYPNYYSLMTGRHCEVHQMTGNYMWDPDTNKSFDLGINRDSRLPLWWNGSEPLWVTLTKAKRKVYMYYWPGCEVEILGVRPTYCLEYKSVPTDINFVNAVSGALDVFKSGQADLAAIYYERVDVEGHHYGPSSPQRKDAVKAVDTVMAYMTKWIQERDLQDDLNVIIFSDHGMTDISWTDKVIKLDNYINLRDLQQLKGRGPVVSLWPAPGKHSEIYNKVRRVEHMTVYAKEDIPSRFYYKKGKFVSPLTLVADEGWFITENRESLPFWMNSTVTRKPEGWQWGWHGYDNELRAMRGIFLAFGPDFKSDFRAAPIRVVDIYNLMCKVTGVTPLPNNGSWSRVMCMLKDPASSAPGAPPCACALVTVLLVLLAILA.

The signal sequence occupies residues M1–A22. The substrate site is built by D32, S71, and N92. Zn(2+)-binding residues include D32 and S71. Residue S71 is the Nucleophile of the active site. Phosphoserine is present on S71. N-linked (GlcNAc...) asparagine glycans are attached at residues N100 and N118. A disulfide bridge connects residues C142 and C154. Position 193 (D193) interacts with substrate. Zn(2+) is bound by residues D193, H197, D240, and H241. Position 241 (H241) interacts with substrate. N341 carries N-linked (GlcNAc...) asparagine glycosylation. H356 is a binding site for substrate. H356 contacts Zn(2+). A glycan (N-linked (GlcNAc...) asparagine) is linked at N406. S421 carries GPI-anchor amidated serine lipidation. Positions S422 to A445 are cleaved as a propeptide — removed in mature form.

The protein belongs to the nucleotide pyrophosphatase/phosphodiesterase family. As to quaternary structure, homodimer; disulfide-linked. Homotetramer. Zn(2+) is required as a cofactor.

The protein localises to the cell membrane. The enzyme catalyses sn-glycerol 3-phosphocholine + H2O = phosphocholine + glycerol + H(+). The catalysed reaction is a 1-acyl-sn-glycero-3-phosphocholine + H2O = a 1-acyl-sn-glycerol + phosphocholine + H(+). It carries out the reaction a 1-O-alkyl-sn-glycero-3-phosphocholine + H2O = a 1-O-alkyl-sn-glycerol + phosphocholine + H(+). It catalyses the reaction 1-dodecanoyl-sn-glycero-3-phosphocholine + H2O = 1-dodecanoyl-sn-glycerol + phosphocholine + H(+). The enzyme catalyses 1-hexadecanoyl-sn-glycero-3-phosphocholine + H2O = 1-hexadecanoyl-sn-glycerol + phosphocholine + H(+). The catalysed reaction is 1-(5Z,8Z,11Z,14Z-eicosatetraenoyl)-sn-glycero-3-phosphocholine + H2O = 1-(5Z,8Z,11Z,14Z-eicosatetraenoyl)-sn-glycerol + phosphocholine + H(+). It carries out the reaction 1-tetradecanoyl-sn-glycero-3-phosphocholine + H2O = 1-tetradecanoyl-sn-glycerol + phosphocholine + H(+). It catalyses the reaction sphing-4-enine-phosphocholine + H2O = sphing-4-enine + phosphocholine + H(+). The enzyme catalyses 1-(9Z-octadecenoyl)-sn-glycero-3-phosphocholine + H2O = 1-(9Z-octadecenoyl)-sn-glycerol + phosphocholine + H(+). The catalysed reaction is 1-(9Z,12Z)-octadecadienoyl-sn-glycero-3-phosphocholine + H2O = 1-(9Z,12Z-octadecadienoyl)-sn-glycerol + phosphocholine + H(+). It carries out the reaction glycero-2-phosphocholine + H2O = phosphocholine + glycerol + H(+). Inhibited by EDTA and EGTA in vitro. In terms of biological role, choline-specific glycerophosphodiesterase that hydrolyzes glycerophosphocholine (GPC) and lysophosphatidylcholine (LPC) and contributes to supplying choline to the cells. Has a preference for LPC with short (12:0 and 14:0) or polyunsaturated (18:2 and 20:4) fatty acids. In vitro, hydrolyzes only choline-containing lysophospholipids, such as sphingosylphosphorylcholine (SPC), platelet-activating factor (PAF) and lysoPAF, but not other lysophospholipids. This chain is Glycerophosphocholine choline phosphodiesterase ENPP6, found in Bos taurus (Bovine).